The sequence spans 47 residues: Gas vesicle protein A (47 aa).

The protein belongs to the gas vesicle GvpA family. The gas vesicle shell is 2 nm thick and consists of a single layer of this protein. It forms helical ribs nearly perpendicular to the long axis of the vesicle.

It is found in the gas vesicle shell. Its function is as follows. Gas vesicles are hollow, gas filled proteinaceous nanostructures found in some microorganisms. During planktonic growth they allow positioning of the organism at a favorable depth for light or nutrient acquisition. GvpA forms the protein shell. The sequence is that of Gas vesicle protein A from Dactylococcopsis salina (Myxobaktron salinum).